Reading from the N-terminus, the 433-residue chain is Apolipoprotein B (433 aa).

N-linked (GlcNAc...) asparagine glycosylation is present at Asn158.

The protein localises to the cytoplasm. Its subcellular location is the secreted. The protein resides in the lipid droplet. In terms of biological role, apolipoprotein B is a major protein constituent of chylomicrons, VLDL and LDL. It functions as a recognition signal for the cellular binding and internalization of LDL particles by the apoB/E receptor. This Gallus gallus (Chicken) protein is Apolipoprotein B (APOB).